We begin with the raw amino-acid sequence, 393 residues long: Probable tRNA sulfurtransferase (393 aa).

The THUMP domain occupies 61 to 168 (DEVIESLTRV…GDVINIYSIE (108 aa)). ATP-binding positions include 186 to 187 (LL), 211 to 212 (YF), R268, G290, and Q299.

This sequence belongs to the ThiI family.

It localises to the cytoplasm. The enzyme catalyses [ThiI sulfur-carrier protein]-S-sulfanyl-L-cysteine + a uridine in tRNA + 2 reduced [2Fe-2S]-[ferredoxin] + ATP + H(+) = [ThiI sulfur-carrier protein]-L-cysteine + a 4-thiouridine in tRNA + 2 oxidized [2Fe-2S]-[ferredoxin] + AMP + diphosphate. It catalyses the reaction [ThiS sulfur-carrier protein]-C-terminal Gly-Gly-AMP + S-sulfanyl-L-cysteinyl-[cysteine desulfurase] + AH2 = [ThiS sulfur-carrier protein]-C-terminal-Gly-aminoethanethioate + L-cysteinyl-[cysteine desulfurase] + A + AMP + 2 H(+). Its pathway is cofactor biosynthesis; thiamine diphosphate biosynthesis. Catalyzes the ATP-dependent transfer of a sulfur to tRNA to produce 4-thiouridine in position 8 of tRNAs, which functions as a near-UV photosensor. Also catalyzes the transfer of sulfur to the sulfur carrier protein ThiS, forming ThiS-thiocarboxylate. This is a step in the synthesis of thiazole, in the thiamine biosynthesis pathway. The sulfur is donated as persulfide by IscS. This is Probable tRNA sulfurtransferase from Lachnospira eligens (strain ATCC 27750 / DSM 3376 / VPI C15-48 / C15-B4) (Eubacterium eligens).